The primary structure comprises 450 residues: Probable glycine dehydrogenase (decarboxylating) subunit 1 (450 aa).

Belongs to the GcvP family. N-terminal subunit subfamily. The glycine cleavage system is composed of four proteins: P, T, L and H. In this organism, the P 'protein' is a heterodimer of two subunits.

The catalysed reaction is N(6)-[(R)-lipoyl]-L-lysyl-[glycine-cleavage complex H protein] + glycine + H(+) = N(6)-[(R)-S(8)-aminomethyldihydrolipoyl]-L-lysyl-[glycine-cleavage complex H protein] + CO2. Its function is as follows. The glycine cleavage system catalyzes the degradation of glycine. The P protein binds the alpha-amino group of glycine through its pyridoxal phosphate cofactor; CO(2) is released and the remaining methylamine moiety is then transferred to the lipoamide cofactor of the H protein. This chain is Probable glycine dehydrogenase (decarboxylating) subunit 1, found in Staphylococcus haemolyticus (strain JCSC1435).